We begin with the raw amino-acid sequence, 704 residues long: MGLARLSLRLRIFLFFAALAMGNLAALVAGLVFGFHKLARPEALSGFVIGGTVAGLVILGLIGVVWALFDANLARPIERLAGSIRARTQTAVDSALDESAGRYLGDLAPAAAAIAQHLNETRSALTEAVQRETTRLAREKDRLETLLSDVPVGVLLCTADHALVFYNGQAVDLLGGAHAPGLDRRVFDYLHPAPIRHAHARLLATADPDAASDLLCATVADGRTLAARMRLISEGEDHQVRRLAGYVLTLRDVSADLRAHAGREALMDELFDRIRRPAAALQSLMGVLIAEDGPADPQARAQLREAARAEAGHLAQAIHSLHDRHEAMRADWWPLAMIRASDFGAAVQARVAAEGAGDLLPVTAALLLRLEGFEMVALIAHLVRRLGPGRAEKRLEVLEDGAGALIALEWRGAAVAIADLELWLSEPLDVGQAEVTGRRVLSVHATDLWPERLHEGRHRLCLPLREARRIGPDPHPVPRPVPRQVVYDFDLLGRGGESALAETPLDKLTFVVFDTETTGLFPTGGDEIVQIAAVRIVNGRRVAGEVFDTLVNPGRPIPAASTAVHGITEAMVATAPAIAEVGRRFHKFAEGAVLVAHNAPFDLEFLRRKELLIGKNFDNPVLDTVLLSAVVFGAAEGHSLDALTHRLGITIPEEARHTALGDTVATAEAFLRLLPALKARGLTTFGAVLTEVRKHGRLMRDMNA.

One can recognise a PAS domain in the interval 139–192 (EKDRLETLLSDVPVGVLLCTADHALVFYNGQAVDLLGGAHAPGLDRRVFDYLHP). Residues 511-704 (VVFDTETTGL…HGRLMRDMNA (194 aa)) form a DNA-polymerase III epsilon chain-like region.

It in the C-terminal section; belongs to the DNA polymerase III epsilon chain family. As to quaternary structure, DNA polymerase III contains a core (composed of alpha, epsilon and theta chains) that associates with a tau subunit. This core dimerizes to form the POLIII' complex. PolIII' associates with the gamma complex (composed of gamma, delta, delta', psi and chi chains) and with the beta chain to form the complete DNA polymerase III complex.

The enzyme catalyses DNA(n) + a 2'-deoxyribonucleoside 5'-triphosphate = DNA(n+1) + diphosphate. Its function is as follows. DNA polymerase III is a complex, multichain enzyme responsible for most of the replicative synthesis in bacteria. The epsilon subunit contain the editing function and is a proofreading 3'-5' exonuclease. This is DNA polymerase III subunit epsilon-like protein (dnaQ) from Rhodobacter capsulatus (strain ATCC BAA-309 / NBRC 16581 / SB1003).